The following is a 332-amino-acid chain: dTDP-3,4-didehydro-2,6-dideoxy-alpha-D-glucose 3-reductase (332 aa).

17-23 (CADIAWR) serves as a coordination point for NADP(+). Arginine 24 provides a ligand contact to substrate. Residues 42–43 (SR), tyrosine 63, leucine 79, and histidine 84 each bind NADP(+). The Proton donor role is filled by lysine 102. NADP(+) contacts are provided by arginine 170 and aspartate 182. Substrate-binding residues include tyrosine 240 and threonine 260.

Belongs to the Gfo/Idh/MocA family. In terms of assembly, homotetramer; dimer of dimers.

The catalysed reaction is dTDP-4-dehydro-2,6-dideoxy-alpha-D-glucose + NADP(+) = dTDP-3,4-didehydro-2,6-dideoxy-alpha-D-glucose + NADPH + H(+). It participates in antibiotic biosynthesis. Functionally, involved in the biosynthesis of L-digitoxose, an unusual dideoxysugar attached to various pharmacologically active natural products, including the antitumor antibiotic tetrocarcin A, and the antibiotics kijanimicin and jadomycin B. Catalyzes the reduction of the C-3 keto moiety of dTDP-3,4-diketo-2,6-dideoxy-alpha-D-glucose to yield dTDP-4-keto-2,6-dideoxy-alpha-D-glucose. Also able to reduce dTDP-3-keto-6-deoxy-D-galactose and dTDP-3-keto-6-deoxy-D-glucose to yield dTDP-fucose and dTDP-quinovose, respectively. This Actinomadura kijaniata protein is dTDP-3,4-didehydro-2,6-dideoxy-alpha-D-glucose 3-reductase.